Reading from the N-terminus, the 428-residue chain is Gamma-glutamyl phosphate reductase (428 aa).

This sequence belongs to the gamma-glutamyl phosphate reductase family.

Its subcellular location is the cytoplasm. It catalyses the reaction L-glutamate 5-semialdehyde + phosphate + NADP(+) = L-glutamyl 5-phosphate + NADPH + H(+). The protein operates within amino-acid biosynthesis; L-proline biosynthesis; L-glutamate 5-semialdehyde from L-glutamate: step 2/2. In terms of biological role, catalyzes the NADPH-dependent reduction of L-glutamate 5-phosphate into L-glutamate 5-semialdehyde and phosphate. The product spontaneously undergoes cyclization to form 1-pyrroline-5-carboxylate. The polypeptide is Gamma-glutamyl phosphate reductase (Treponema pallidum (strain Nichols)).